Here is an 84-residue protein sequence, read N- to C-terminus: Beta-defensin 119 (84 aa).

Residues 1 to 21 (MKLLYLFLAILLVIEEPVISG) form the signal peptide. Intrachain disulfides connect Cys28–Cys55, Cys35–Cys49, and Cys39–Cys56.

This sequence belongs to the beta-defensin family.

The protein localises to the secreted. Functionally, has antibacterial activity. The chain is Beta-defensin 119 (DEFB119) from Pongo pygmaeus (Bornean orangutan).